A 189-amino-acid polypeptide reads, in one-letter code: Receptor activity-modifying protein 2 (189 aa).

An N-terminal signal peptide occupies residues 1-44; it reads MAPLRVERAPGGSRLGVTRAQRPTALCLPPLLLLLLLLLGAVSA. Topologically, residues 45–157 are extracellular; sequence SPESLNQSLP…VQPTFSDPPE (113 aa). Over residues 49–61 the composition is skewed to polar residues; it reads LNQSLPESQNQSH. Positions 49 to 69 are disordered; sequence LNQSLPESQNQSHPTEDSLVS. Residues Asn50, Asn58, Asn99, and Asn144 are each glycosylated (N-linked (GlcNAc...) asparagine). Intrachain disulfides connect Cys83/Cys113 and Cys98/Cys145. Residues 158–179 traverse the membrane as a helical segment; that stretch reads DVLLAMIIAPICLIPFLVTLVV. At 180 to 189 the chain is on the cytoplasmic side; the sequence is WRSKDSDAQA.

The protein belongs to the RAMP family. Heterodimer of CALCRL and RAMP2; the interaction forms the receptor complex for adrenomedullin/ADM. Heterodimer of CALCR and RAMP2; interaction forms the AMYR2 receptor complex for calcitonin/CALC and amylin/IAPP. As to expression, ubiquitous. Expressed predominantly in embryonic brain, lung and gut and in adult heart, lung, skeletal muscle and brain.

It localises to the cell membrane. Accessory protein that interacts with and modulates the function of G-protein coupled receptors including calcitonin gene-related peptide type 1 receptor (CALCRL) and calcitonin receptor (CALCR). Required for the transport of CALCRL to the plasma membrane. Together with CALCRL, form a receptor complex for adrenomedullin/ADM. Together with CALCR, act as a receptor complex for calcitonin/CT/CALC. Together with CALCR, also act as a receptor complex for amylin/IAPP. The chain is Receptor activity-modifying protein 2 from Mus musculus (Mouse).